The primary structure comprises 226 residues: MSSGFEFQLASYTTMPVTLLETLYSMRKKIFSDRLEWKVRVSHAFEFDEYDNAATTYLVGSWNGVPLAGLRLINTCDPYMLEGPFRSFFDCPAPKNAAMAESSRFFVDTARARSLGILHAPLTEMLLFSMHNHAALSGLQSIITVVSKAMARIVRKSGWEHHVLSTGEASPGETVLLLEMPVTADNHQRLLGNIALRQPVTDDLLRWPIALGVSGSAPQACMHSAA.

This sequence belongs to the autoinducer synthase family.

It carries out the reaction a fatty acyl-[ACP] + S-adenosyl-L-methionine = an N-acyl-L-homoserine lactone + S-methyl-5'-thioadenosine + holo-[ACP] + H(+). Functionally, required for the synthesis of OHHL (N-(3-oxohexanoyl)-L-homoserine lactone), an autoinducer molecule. The sequence is that of Acyl-homoserine-lactone synthase (psyI) from Pseudomonas amygdali pv. tabaci (Pseudomonas syringae pv. tabaci).